A 526-amino-acid chain; its full sequence is Nucleolar complex protein 4 homolog A (526 aa).

The next 3 membrane-spanning stretches (helical) occupy residues 307–327 (AAYD…FILI), 358–378 (FFHL…LVAA), and 386–406 (LALT…CNLI).

It belongs to the CBF/MAK21 family.

The protein resides in the nucleus membrane. Its subcellular location is the nucleus. It is found in the nucleolus. This is Nucleolar complex protein 4 homolog A (noc4l-a) from Xenopus laevis (African clawed frog).